The primary structure comprises 395 residues: S-adenosylmethionine synthase (395 aa).

His-16 provides a ligand contact to ATP. Asp-18 is a Mg(2+) binding site. Glu-44 contributes to the K(+) binding site. 2 residues coordinate L-methionine: Glu-57 and Gln-100. Residues 100-110 (QSPDIAQGVDR) form a flexible loop region. Residues 167–169 (DAK), 233–234 (RF), Asp-242, 248–249 (RK), Ala-265, and Lys-269 each bind ATP. An L-methionine-binding site is contributed by Asp-242. Residue Lys-273 coordinates L-methionine.

The protein belongs to the AdoMet synthase family. Homotetramer; dimer of dimers. It depends on Mg(2+) as a cofactor. Requires K(+) as cofactor.

The protein localises to the cytoplasm. The enzyme catalyses L-methionine + ATP + H2O = S-adenosyl-L-methionine + phosphate + diphosphate. The protein operates within amino-acid biosynthesis; S-adenosyl-L-methionine biosynthesis; S-adenosyl-L-methionine from L-methionine: step 1/1. Its function is as follows. Catalyzes the formation of S-adenosylmethionine (AdoMet) from methionine and ATP. The overall synthetic reaction is composed of two sequential steps, AdoMet formation and the subsequent tripolyphosphate hydrolysis which occurs prior to release of AdoMet from the enzyme. The sequence is that of S-adenosylmethionine synthase from Burkholderia vietnamiensis (strain G4 / LMG 22486) (Burkholderia cepacia (strain R1808)).